The following is a 373-amino-acid chain: Putative citrate synthase 2 (373 aa).

Active-site residues include H250 and E303.

This sequence belongs to the citrate synthase family.

It carries out the reaction oxaloacetate + acetyl-CoA + H2O = citrate + CoA + H(+). It functions in the pathway carbohydrate metabolism; tricarboxylic acid cycle; isocitrate from oxaloacetate: step 1/2. This is Putative citrate synthase 2 (citA) from Mycobacterium bovis (strain ATCC BAA-935 / AF2122/97).